Consider the following 499-residue polypeptide: 6-hydroxynicotinate reductase (499 aa).

4Fe-4S ferredoxin-type domains follow at residues 1 to 29 and 31 to 61; these read MFKIDEEKCKKCRMCVKECPVHAVYYEKK and KGAIVEITEKCVECGICKRVCKFGAIENDAP. 8 residues coordinate [4Fe-4S] cluster: Cys9, Cys12, Cys15, Cys19, Cys41, Cys44, Cys47, and Cys51.

Homotetramer. Requires an oxidized flavin as cofactor. [2Fe-2S] cluster serves as cofactor. [4Fe-4S] cluster is required as a cofactor.

The catalysed reaction is 1,4,5,6-tetrahydro-6-oxonicotinate + oxidized 2[4Fe-4S]-[ferredoxin] = 6-hydroxynicotinate + reduced 2[4Fe-4S]-[ferredoxin] + 2 H(+). Its pathway is cofactor degradation; nicotinate degradation; propanoate and pyruvate from 6-hydroxynicotinate: step 1/8. In terms of biological role, catalyzes the reversible reduction of 6-hydroxynicotinate to 6-oxo-1,4,5,6-tetrahydronicotinate. This chain is 6-hydroxynicotinate reductase, found in Eubacterium barkeri (Clostridium barkeri).